A 441-amino-acid chain; its full sequence is COBRA-like protein 2 (441 aa).

An N-terminal signal peptide occupies residues 1–28 (MNILFSRFSFLLLFLCSWTSFTFTTTEA). N-linked (GlcNAc...) asparagine glycosylation is found at asparagine 37, asparagine 162, asparagine 170, asparagine 209, asparagine 234, asparagine 249, asparagine 314, asparagine 329, and asparagine 348. Asparagine 417 carries GPI-anchor amidated asparagine lipidation. A propeptide spans 418–441 (ASPNIATSPFVILLITFLSVLILM) (removed in mature form).

Belongs to the COBRA family. In terms of tissue distribution, expressed in roots, stems, leaves, flowers and siliques.

The protein resides in the cell membrane. This Arabidopsis thaliana (Mouse-ear cress) protein is COBRA-like protein 2 (COBL2).